We begin with the raw amino-acid sequence, 360 residues long: DNA replication and repair protein RecF (360 aa).

30–37 is a binding site for ATP; the sequence is GQNGSGKT.

Belongs to the RecF family.

The protein resides in the cytoplasm. In terms of biological role, the RecF protein is involved in DNA metabolism; it is required for DNA replication and normal SOS inducibility. RecF binds preferentially to single-stranded, linear DNA. It also seems to bind ATP. The sequence is that of DNA replication and repair protein RecF from Shewanella frigidimarina (strain NCIMB 400).